A 497-amino-acid chain; its full sequence is uncharacterized protein (497 aa).

A compositionally biased stretch (polar residues) spans 1-16 (MSTTTETVTWSQYKPQ). The disordered stretch occupies residues 1 to 29 (MSTTTETVTWSQYKPQETQRRLSRSSTIT). Residue Ser64 is modified to Phosphoserine. The next 6 helical transmembrane spans lie at 86-106 (IALVLLNNLMSEMSLTIALPI), 120-140 (FSGLVIGIPTMISLVCLYPML), 155-175 (FRPLIVSCISQIIGHLLYSLA), 180-200 (WLYLILIGRMCSGVGFTMFLY), 222-242 (LNILAQILGSMAGAFLGGILA), and 258-278 (AGSWFMLFIWIVYSIFLSIFF). At Ser295 the chain carries Phosphoserine. Transmembrane regions (helical) follow at residues 309 to 329 (FMLCFLSMAAFISIFNVAGYQ), 348 to 368 (GNFLSLSSLVIAPFVFFSTFL), 377 to 397 (IMLYGFMMGIVALIVHLVLDA), 407 to 427 (FVLYSIMQFGFSVGSAPLVSL), 443 to 463 (VVQVGISIGETVGSICGGAIF), and 468 to 488 (VGFIAMNLGIALLVFIQLLYL).

The protein resides in the membrane. This is an uncharacterized protein from Schizosaccharomyces pombe (strain 972 / ATCC 24843) (Fission yeast).